A 370-amino-acid polypeptide reads, in one-letter code: Chorismate synthase (370 aa).

Arg-48 is an NADP(+) binding site. FMN contacts are provided by residues 125 to 127 (RSS), 241 to 242 (NA), Gly-285, 300 to 304 (KPTSS), and Arg-326.

Belongs to the chorismate synthase family. Homotetramer. FMNH2 serves as cofactor.

The enzyme catalyses 5-O-(1-carboxyvinyl)-3-phosphoshikimate = chorismate + phosphate. It participates in metabolic intermediate biosynthesis; chorismate biosynthesis; chorismate from D-erythrose 4-phosphate and phosphoenolpyruvate: step 7/7. Functionally, catalyzes the anti-1,4-elimination of the C-3 phosphate and the C-6 proR hydrogen from 5-enolpyruvylshikimate-3-phosphate (EPSP) to yield chorismate, which is the branch point compound that serves as the starting substrate for the three terminal pathways of aromatic amino acid biosynthesis. This reaction introduces a second double bond into the aromatic ring system. The chain is Chorismate synthase from Jannaschia sp. (strain CCS1).